A 184-amino-acid chain; its full sequence is ATP synthase subunit b, chloroplastic (184 aa).

A helical transmembrane segment spans residues Ile31 to Leu49.

This sequence belongs to the ATPase B chain family. As to quaternary structure, F-type ATPases have 2 components, F(1) - the catalytic core - and F(0) - the membrane proton channel. F(1) has five subunits: alpha(3), beta(3), gamma(1), delta(1), epsilon(1). F(0) has four main subunits: a(1), b(1), b'(1) and c(10-14). The alpha and beta chains form an alternating ring which encloses part of the gamma chain. F(1) is attached to F(0) by a central stalk formed by the gamma and epsilon chains, while a peripheral stalk is formed by the delta, b and b' chains.

It is found in the plastid. Its subcellular location is the chloroplast thylakoid membrane. Functionally, f(1)F(0) ATP synthase produces ATP from ADP in the presence of a proton or sodium gradient. F-type ATPases consist of two structural domains, F(1) containing the extramembraneous catalytic core and F(0) containing the membrane proton channel, linked together by a central stalk and a peripheral stalk. During catalysis, ATP synthesis in the catalytic domain of F(1) is coupled via a rotary mechanism of the central stalk subunits to proton translocation. Component of the F(0) channel, it forms part of the peripheral stalk, linking F(1) to F(0). This is ATP synthase subunit b, chloroplastic from Pinus thunbergii (Japanese black pine).